The following is a 463-amino-acid chain: Abscisic acid 8'-hydroxylase 3 (463 aa).

The chain crosses the membrane as a helical span at residues 6–26 (LFLTLSAAALFLCLLRFIAGV). Residue Cys411 coordinates heme.

The protein belongs to the cytochrome P450 family. Requires heme as cofactor. Mainly expressed in flower buds, flowers, rosette leaves and roots. Lower expression in mature siliques and inflorescence stems. Not expressed in dry seeds.

The protein resides in the membrane. It catalyses the reaction 2-cis-(+)-abscisate + reduced [NADPH--hemoprotein reductase] + O2 = (+)-8'-hydroxyabscisate + oxidized [NADPH--hemoprotein reductase] + H2O + H(+). It participates in plant hormone degradation; abscisic acid degradation. Inhibited by tetcyclcis, but not by metyrapone. Involved in the oxidative degradation of abscisic acid, but not in the isomerization of the produced 8'-hydroxyabscisic acid (8'-OH-ABA) to (-)-phaseic acid (PA). Involved in the control of postgermination growth. This is Abscisic acid 8'-hydroxylase 3 (CYP707A3) from Arabidopsis thaliana (Mouse-ear cress).